Here is a 602-residue protein sequence, read N- to C-terminus: Ligand-dependent nuclear receptor corepressor-like protein (602 aa).

The disordered stretch occupies residues 104 to 124 (PSLDSSQSTPTEELSSQGQSN). A compositionally biased stretch (polar residues) spans 106–124 (LDSSQSTPTEELSSQGQSN). Glycyl lysine isopeptide (Lys-Gly) (interchain with G-Cter in SUMO2) cross-links involve residues lysine 242, lysine 319, lysine 340, and lysine 397. Disordered stretches follow at residues 495 to 521 (TVDG…KRGR) and 564 to 602 (ERSG…SKPV). The 53-residue stretch at 516-568 (RKKRGRYRQYDHEIMEEAIAMVMSGKMSVSKAQGIYGVPHSTLEYKVKERSGT) folds into the HTH psq-type domain. The H-T-H motif DNA-binding region spans 544-564 (VSKAQGIYGVPHSTLEYKVKE). Residues 585 to 602 (YNMTDSGTGSCKNSSKPV) show a composition bias toward polar residues.

The protein localises to the nucleus. Its function is as follows. May act as transcription activator that binds DNA elements with the sequence 5'-CCCTATCGATCGATCTCTACCT-3'. May play a role in spermatogenesis. The protein is Ligand-dependent nuclear receptor corepressor-like protein (LCORL) of Homo sapiens (Human).